The sequence spans 206 residues: FMN-dependent NADH:quinone oxidoreductase (206 aa).

FMN is bound by residues 15–17 (SVS), 94–97 (MYNF), and 138–141 (TRGG).

The protein belongs to the azoreductase type 1 family. In terms of assembly, homodimer. Requires FMN as cofactor.

The enzyme catalyses 2 a quinone + NADH + H(+) = 2 a 1,4-benzosemiquinone + NAD(+). The catalysed reaction is N,N-dimethyl-1,4-phenylenediamine + anthranilate + 2 NAD(+) = 2-(4-dimethylaminophenyl)diazenylbenzoate + 2 NADH + 2 H(+). In terms of biological role, quinone reductase that provides resistance to thiol-specific stress caused by electrophilic quinones. Functionally, also exhibits azoreductase activity. Catalyzes the reductive cleavage of the azo bond in aromatic azo compounds to the corresponding amines. This chain is FMN-dependent NADH:quinone oxidoreductase, found in Sinorhizobium fredii (strain NBRC 101917 / NGR234).